The following is a 120-amino-acid chain: NAD(P)H-quinone oxidoreductase subunit 3, chloroplastic (120 aa).

Transmembrane regions (helical) follow at residues 9-29, 64-84, and 88-108; these read IFWA…FISG, MFAL…PWAM, and VLGV…IVGL.

This sequence belongs to the complex I subunit 3 family. NDH is composed of at least 16 different subunits, 5 of which are encoded in the nucleus.

The protein resides in the plastid. Its subcellular location is the chloroplast thylakoid membrane. The catalysed reaction is a plastoquinone + NADH + (n+1) H(+)(in) = a plastoquinol + NAD(+) + n H(+)(out). The enzyme catalyses a plastoquinone + NADPH + (n+1) H(+)(in) = a plastoquinol + NADP(+) + n H(+)(out). NDH shuttles electrons from NAD(P)H:plastoquinone, via FMN and iron-sulfur (Fe-S) centers, to quinones in the photosynthetic chain and possibly in a chloroplast respiratory chain. The immediate electron acceptor for the enzyme in this species is believed to be plastoquinone. Couples the redox reaction to proton translocation, and thus conserves the redox energy in a proton gradient. This Lactuca sativa (Garden lettuce) protein is NAD(P)H-quinone oxidoreductase subunit 3, chloroplastic.